Here is a 207-residue protein sequence, read N- to C-terminus: Large ribosomal subunit protein uL4 (207 aa).

It belongs to the universal ribosomal protein uL4 family. In terms of assembly, part of the 50S ribosomal subunit.

Functionally, one of the primary rRNA binding proteins, this protein initially binds near the 5'-end of the 23S rRNA. It is important during the early stages of 50S assembly. It makes multiple contacts with different domains of the 23S rRNA in the assembled 50S subunit and ribosome. Forms part of the polypeptide exit tunnel. The polypeptide is Large ribosomal subunit protein uL4 (Rickettsia conorii (strain ATCC VR-613 / Malish 7)).